Here is a 452-residue protein sequence, read N- to C-terminus: MKKKILFLGVGGIGVSALAIAAKKLGADVAGYDSIPNKLTIKLESLGISIFSSPNNVDVSGYDMVVYSSAILDNHPLLSKARVLGVQCLKRAMFLALLMKDFRYSIAVTGTHGKTTTSSILATLLCKLDTTNSFVVGGVVKYADSNIQINGTDRLVIEADESDASFLYLNPNVAIVTNIDLDHMSTYKNSYDNLLENFANFLMKESIENIYLCVDDHGCNDLLDKYRSRVVGNIVSYGFAINSDARIYNYRVSDNLTTFTVEYKSGKYDFELQLPGKYNVQNATACVVACLDLGFSYKDIYNALATVKGVARRFDVYDKQISSHKIPVIDDYGHHPVEVTSSLGAVRDRYPNKKIIHVFQPHRYTRNRDLLIDWPKALSLADQLIILPTYSAGEQIIQGAESQDLIRNIPKVLLADSFDHVLYFLEKLVDDNTVVLIQGAGDITNLVGMIGE.

110 to 116 (GTHGKTT) is an ATP binding site.

It belongs to the MurCDEF family.

Its subcellular location is the cytoplasm. The catalysed reaction is UDP-N-acetyl-alpha-D-muramate + L-alanine + ATP = UDP-N-acetyl-alpha-D-muramoyl-L-alanine + ADP + phosphate + H(+). Its pathway is cell wall biogenesis; peptidoglycan biosynthesis. Cell wall formation. This chain is UDP-N-acetylmuramate--L-alanine ligase, found in Francisella philomiragia subsp. philomiragia (strain ATCC 25017 / CCUG 19701 / FSC 153 / O#319-036).